The sequence spans 804 residues: DNA mismatch repair protein MutS (804 aa).

ATP is bound at residue 614-621; that stretch reads GPNMAGKS.

Belongs to the DNA mismatch repair MutS family.

Functionally, this protein is involved in the repair of mismatches in DNA. It is possible that it carries out the mismatch recognition step. This protein has a weak ATPase activity. The sequence is that of DNA mismatch repair protein MutS from Ehrlichia ruminantium (strain Gardel).